The sequence spans 258 residues: Probable glycerol uptake facilitator protein (258 aa).

The next 2 membrane-spanning stretches (helical) occupy residues 11-31 (WWFL…NGAV) and 50-70 (TVAL…NAIF). The short motif at 77 to 79 (NPA) is the NPA 1 element. The next 3 helical transmembrane spans lie at 95 to 115 (ALIW…AMIA), 152 to 172 (FLTE…ASHF), and 180 to 200 (VPPG…FGGA). An NPA 2 motif is present at residues 206–208 (NPA). A helical transmembrane segment spans residues 233–253 (WIPVIAPLSAGLVLSIIIGFS).

Belongs to the MIP/aquaporin (TC 1.A.8) family.

Its subcellular location is the cell membrane. The catalysed reaction is glycerol(in) = glycerol(out). In terms of biological role, mediates glycerol diffusion across the cytoplasmic membrane via a pore-type mechanism. The protein is Probable glycerol uptake facilitator protein (glpF) of Mycoplasma genitalium (strain ATCC 33530 / DSM 19775 / NCTC 10195 / G37) (Mycoplasmoides genitalium).